A 787-amino-acid chain; its full sequence is Lysine-specific demethylase JMJ13 (787 aa).

The JmjN domain maps to 103-144; that stretch reads CPVYRPTKEEFEDPLTYLQKIFPEASKYGICKIVSPLTATVP. Positions 250 to 420 constitute a JmjC domain; the sequence is SSKWNLNKVS…FGAIASCRYA (171 aa). 3 residues coordinate Fe cation: His293, Glu295, and His388. Positions 500, 503, 514, 516, 519, 522, 525, and 534 each coordinate Zn(2+). The segment at 500 to 551 adopts a C4HCHC zinc-finger fold; sequence CSLCKRDCYLAFINCECYSHPVCLRHDVKKLDLPCGTTHTLYLRDNIEDMEA. The C5HC2 zinc-finger motif lies at 500–551; it reads CSLCKRDCYLAFINCECYSHPVCLRHDVKKLDLPCGTTHTLYLRDNIEDMEA. Residues 617–675 enclose the FYR N-terminal domain; that stretch reads VMSYEANASCISSVADDYECSDYVNRRANCSSSSDSKLSEEVACSSSKKTRFFPVVQDE. One can recognise an FYR C-terminal domain in the interval 677–756; sequence LVADQESDGS…ELVISNRKET (80 aa). The segment at 712 to 769 is disordered; the sequence is ESDHHQELKRLKKSHHHEGRYSSSSSVSRQEEEEDELVISNRKETQQQSDVKMQKKRI. Positions 752-759 match the Nuclear localization signal motif; it reads NRKETQQQ.

It belongs to the JARID1 histone demethylase family. Requires Fe(2+) as cofactor. Mostly expressed in leaves, and, to a lower extent, in inflorescences, roots, siliques and stems.

The protein resides in the nucleus. It carries out the reaction N(6),N(6),N(6)-trimethyl-L-lysyl(27)-[histone H3] + 2-oxoglutarate + O2 = N(6),N(6)-dimethyl-L-lysyl(27)-[histone H3] + formaldehyde + succinate + CO2. In terms of biological role, histone demethylase that demethylates 'Lys-27' (H3K27me) of histone H3 with a specific activity for H3K27me3 and involved in the regulation of gene expression. Acts as a temperature and photoperiod dependent flowering repressor. In Arabidopsis thaliana (Mouse-ear cress), this protein is Lysine-specific demethylase JMJ13.